Here is a 277-residue protein sequence, read N- to C-terminus: MVEKFVSAERPQTEEGMQYHIACKPGDVARYVLLPGDPERVPKISSLWDEAREIAFHREYRTHTGKYKGVPISVTSTGIGGPSTAIAIEELAAIGADTFIRVGSTGAIQPGIEIGDLIIAKAAVRLEGTSKQYVRVEYPAVADLEVTLALIEAAESLGVRYHIGITASTDSFYLGQGRPGLNGYFPSFARNLVDDLRQARVTNFEMEAATLYTLANIYGLRAGCVCAVFANRVTNEFGKAGEKEAALVASEAVKILAEWDEEKERAGKRVWHPGMRG.

The protein belongs to the PNP/UDP phosphorylase family.

It localises to the cytoplasm. It catalyses the reaction uridine + phosphate = alpha-D-ribose 1-phosphate + uracil. Its pathway is pyrimidine metabolism; UMP biosynthesis via salvage pathway; uracil from uridine (phosphorylase route): step 1/1. In terms of biological role, catalyzes the reversible phosphorylytic cleavage of uridine to uracil and ribose-1-phosphate. The sequence is that of Uridine phosphorylase from Thermococcus kodakarensis (strain ATCC BAA-918 / JCM 12380 / KOD1) (Pyrococcus kodakaraensis (strain KOD1)).